A 441-amino-acid polypeptide reads, in one-letter code: Polyketide methyltransferase ustM (441 aa).

Positions 266–368 (LEVGAGLGGT…VRKLLRGGGF (103 aa)) are methyltransferase (CMeT) domain.

It belongs to the methyltransferase superfamily.

It participates in secondary metabolite biosynthesis. In terms of biological role, polyketide methyltransferase; part of the gene cluster that mediates the biosynthesis of ustilaginoidins, dimeric gamma-naphthopyrones isolated from different fungal species. The first step in the biosynthesis of ustilaginoidins is the production of gamma-naphthopyrone precursor YWA1 by the non-reducing polyketide synthase ustP, via condensation of one acetyl-CoA starter unit with 6 malonyl-CoA units. YWA1 is then probably substrate of the ustZ to yield norrubrofusarin via a dehydration reaction. A key enzyme in the biosynthetic pathway is the laccase ustL, which catalyzes the oxidative dimerization of norrubrofusarin to ustilaginoidin A. It can produce the M- and P-atropisomers in varying amounts, depending on the reaction conditions. For the biosynthesis of 3-methylustilaginoid in derivatives such as chaetochromin A, a methylated derivative of YWA1 is required. The C-methylation is considered to be catalyzed by ustM, the phosphopantetheine attachment site of which indicates that it acts on the growing polyketide chain before release of the product. For the biosynthesis of chaetochromin A, it is assumed that saturation of the D2 double bond takes place before dimerization, and is probably catalyzed by an external reductase because no candidate gene was identified within the cluster. This Ustilaginoidea virens (Rice false smut fungus) protein is Polyketide methyltransferase ustM.